The sequence spans 89 residues: Porphobilinogen deaminase (89 aa).

It belongs to the HMBS family. Monomer. The cofactor is dipyrromethane.

It carries out the reaction 4 porphobilinogen + H2O = hydroxymethylbilane + 4 NH4(+). Its pathway is porphyrin-containing compound metabolism; protoporphyrin-IX biosynthesis; coproporphyrinogen-III from 5-aminolevulinate: step 2/4. Tetrapolymerization of the monopyrrole PBG into the hydroxymethylbilane pre-uroporphyrinogen in several discrete steps. In Dickeya chrysanthemi (Pectobacterium chrysanthemi), this protein is Porphobilinogen deaminase (hemC).